Reading from the N-terminus, the 554-residue chain is Urocanate hydratase (554 aa).

NAD(+) is bound by residues 51-52 (GG), Q129, 175-177 (GMG), E195, R200, 241-242 (NA), 262-266 (QTSAH), 272-273 (YL), and Y321. The active site involves C409. An NAD(+)-binding site is contributed by G491.

It belongs to the urocanase family. Requires NAD(+) as cofactor.

Its subcellular location is the cytoplasm. The enzyme catalyses 4-imidazolone-5-propanoate = trans-urocanate + H2O. Its pathway is amino-acid degradation; L-histidine degradation into L-glutamate; N-formimidoyl-L-glutamate from L-histidine: step 2/3. Catalyzes the conversion of urocanate to 4-imidazolone-5-propionate. This is Urocanate hydratase from Caulobacter sp. (strain K31).